The chain runs to 117 residues: DNA-directed RNA polymerase subunit omega (117 aa).

The span at 96-105 (KEEAEEEAKQ) shows a compositional bias: basic and acidic residues. The segment at 96-117 (KEEAEEEAKQKNSRAAKAAAAE) is disordered. Residues 108–117 (SRAAKAAAAE) show a composition bias toward low complexity.

Belongs to the RNA polymerase subunit omega family. As to quaternary structure, the RNAP catalytic core consists of 2 alpha, 1 beta, 1 beta' and 1 omega subunit. When a sigma factor is associated with the core the holoenzyme is formed, which can initiate transcription.

The catalysed reaction is RNA(n) + a ribonucleoside 5'-triphosphate = RNA(n+1) + diphosphate. Its function is as follows. Promotes RNA polymerase assembly. Latches the N- and C-terminal regions of the beta' subunit thereby facilitating its interaction with the beta and alpha subunits. This chain is DNA-directed RNA polymerase subunit omega (rpoZ), found in Lactococcus lactis subsp. lactis (strain IL1403) (Streptococcus lactis).